A 543-amino-acid polypeptide reads, in one-letter code: Chaperonin GroEL (543 aa).

ATP contacts are provided by residues 30 to 33 (TLGP), K51, 87 to 91 (DGTTT), G415, and D496.

Belongs to the chaperonin (HSP60) family. As to quaternary structure, forms a cylinder of 14 subunits composed of two heptameric rings stacked back-to-back. Interacts with the co-chaperonin GroES.

The protein resides in the cytoplasm. It carries out the reaction ATP + H2O + a folded polypeptide = ADP + phosphate + an unfolded polypeptide.. Together with its co-chaperonin GroES, plays an essential role in assisting protein folding. The GroEL-GroES system forms a nano-cage that allows encapsulation of the non-native substrate proteins and provides a physical environment optimized to promote and accelerate protein folding. The sequence is that of Chaperonin GroEL from Gluconobacter oxydans (strain 621H) (Gluconobacter suboxydans).